Consider the following 2463-residue polypeptide: MVNLVYVCMKINNSVVMVGLYYGFISAFSIGSSYLFLLRPRFLNDDPDAIEKKASETAGFFTGQLLIFISILYGPLHLALGRPHTILLLLAPYFFFHYLFSNSGQWPSQRFAFPLLTKSMRNRRFQLVFLNNLLFQLFSLSLLGRPMLTRLSYIYIFRCNNKMLFVLSSFVGWLIGHILVLKWAGLVFVWLLQVIRSKTMKYITCNVLIPATKYIIEKWRNSFVAGLIREILAMKQVESALVRIKNSKLLDDARWWIRGSSLISGLKINIRFYARLILRGFENVYVGAKFRQDMEHLFSIILFAIFLLYLDQTPLLYADPADKKLQLQRKLSNETQAARAEKKLEERLTKKFEAQRRAQRAAQRQALQEFKQGVVESYLAKQVAKDANQIQAQKDEKQIQAEQKARRIRAEQVVQYTFWLIEAQRREMEIEAARAMQEAYKGMLAAQEGYVEEGVQEKQEGFPEELISPSPIFHSEEREENPKLLILKEKISILKKKISILKKKISILKEKNDLFSFEIPIITSLFDPQKPLRPLRYIKTCAGVEKAVKNEMSQYFFYACRSDGKQRICFTYPPSLATFWEMIQRKMASRFPRIYAKAKWRALRWSAPGSYRQWISRNKKKKNSLSTEFQNRIKTLDKKKSLLNVLARRKRSSLLNVLARRKRSSLQNVLETRKRLCNYKTNKTKKEYLPEKEYLPEIADPFLTGALRGKSDPEVDDGGRKTSDLIKVVFLKNNITMATLRNKNDDDLREQKNAIALLSRMKNPVNKLHLLFVNERDYPFVKTLVNRINGPAVPKKKKKISKSKQKNVKSKQKNVKSKQKNVKSKQKNVKSKQNEIKRKVNEIKRKVNEIKRKQNESYPRGVKFGATPKTEINPHGIRFDAATIEKYSFATGYSYSPPSFDDILFHAFVTEPQRNKKAVIELEEEINKKVPRWSYQLIDELEQLEGAEGETQFSDHEIRILPFKRVAVFTEKDSKKRKPLIDEQGNFVRHRKTYAIRFLGHMSDFRRGLIKGSARQDRRKAYVCRTTQVNARSPLFALGPRTFLDGLVNLAVQVKFFYETRIKGEKIVDDDDDNEKDEFKVMIPDTKSIVAETREMLKQAGAEDGQSYEDVEDDIRIENVTEMWENIDYGQVIRTFILLLHIFLRKKVVFPAFIIGKNIARMLLLQATEWKIDFARLKRERYAICTYNGMKVSEKIAFDQFPPDWADDGIQILVTNPFYLKPWYRSKTRSIQKDPKKEKDPKKEKGPKKEPWYRFKTRFIQKDPKKEKGPKKEKGPKKEPWYRRFFFQKDPKKEKGPKKGKAQFEGDRGVRFLTSFGILTDRPFGDLITPDWGVFFNPIRNELKKKIRQFEKKHSIILSKRFRNVLKKTKKWFIKSFLFLKRARLKRHPIELSGGRETPEFTRSQKDIDNLKNEQDFRMSRNPRISESLLQGPVRALKDDSLPEEKVADPEKEPSDLDNELRAVWDEIDKVTKERKKIVFTPKPDSPDKLVQAKKNILKKLERIKSRRHKFYFLRIRKSYYVLLFFIKRISRNIKRIYLNPLERAISIRKIHPQRFFEFSKKMIEKSIGIGKTETNKETVYKTKKKKKKKNPFISIFKESLYDKDIRISENDIKLGDTWNGYKYKRKKATDTSDLASMSQAYVFYKLYQTQQTQLIHLDKLRYVLQYDGTSRFLKKELKDYFEAQELFHSKLKHKNSLNSGKNQWKNWLKAQHQYSVSPIIWNSLSPQKWRTKVNQERMDENTDLNKRYSNEKRKQFFEANSLDDEENVVETYLGQRAGDIKNSIKSYSYDLFSYQSINSEDKYVCINNKQKNSYNYNRRKVNLVDSPEGIALSNQFLVQNDLLDLYTFPDRKYVPWRLFPGSLIGGNDKDKDRFVKMWTATNSGNAVKYWTAANGNTSIKPGVFWTFQNSQRTKKQNPLFDWRGMNTELPNRCISDLKGWFFFSELLKLDLRYQVKPWILSKNLLFENLIFENQEENPNLIQNPIEDGRKNVIQNENENDPIEDGRQNVIQNENENAIQNLIDFFLEKKNSPKDTNQELHAQAKARIWDALVASLKQKREQKERKNKRIAQLIEKKKQKEIEKQKRKIEKQKRKKEKIENAKKKIENEKKKIETEEEKIEKEKRKKERKKEKLKKKVAKNIEKLKNKVAKNVAKNIEKLKKQRAKNIARMEEEDKKARKKRKRKVQVQENKIPYTAFGSDKWQRPIAEYPKSGDIRNFQVILPEDDDEDDEEDRLDELKLNAYELSRIQKITDEKRMKRNLLSSIKRERLKMEFSTRNNSLATIMLTHGIFSIEPLRISRQNQDASFLIYQLIKISLVEQLDPYDHNDSFELTEKYRARRNFFMPKTNAETMHKSDSDLFVPETILSTKRRRELRILISFYSRRGKRKNRIYKNPVFWKYVKNCGEVVDNSEKKKKKLIKSFLWPNYRLEDLACMNRYWFNAQNGSRFSMLRIRMYPRLKIR.

Helical transmembrane passes span 18 to 38 (VGLY…LFLL), 60 to 80 (FFTG…HLAL), 86 to 106 (ILLL…SGQW), 127 to 147 (LVFL…GRPM), 170 to 190 (FVGW…VFVW), and 297 to 317 (LFSI…PLLY). The stretch at 326 to 441 (QLQRKLSNET…AARAMQEAYK (116 aa)) forms a coiled coil. Disordered regions lie at residues 792–841 (AVPK…RKVN), 1230–1249 (SIQK…GPKK), 1393–1417 (SGGR…EQDF), 2116–2136 (EEEK…KLKK), and 2162–2187 (KQRA…RKVQ). Positions 794-830 (PKKKKKISKSKQKNVKSKQKNVKSKQKNVKSKQKNVK) are enriched in basic residues. Basic and acidic residues-rich tracts occupy residues 832 to 841 (KQNEIKRKVN), 1231 to 1249 (IQKD…GPKK), and 1397 to 1417 (ETPE…EQDF). Residues 2049 to 2192 (WDALVASLKQ…KRKVQVQENK (144 aa)) adopt a coiled-coil conformation. Positions 2124 to 2136 (KRKKERKKEKLKK) are enriched in basic residues.

The protein belongs to the TIC214 family. In terms of assembly, part of the Tic complex.

The protein resides in the plastid. Its subcellular location is the chloroplast inner membrane. Its function is as follows. Involved in protein precursor import into chloroplasts. May be part of an intermediate translocation complex acting as a protein-conducting channel at the inner envelope. In Oenothera elata subsp. hookeri (Hooker's evening primrose), this protein is Protein TIC 214.